The following is a 185-amino-acid chain: MINEIKKDAQTRMQKSLESLTHAFTRIRTGKAHPSILGGVMVPYYGADTPLSQVANVTVKDSRTLQVVAFERNMLAAVDKAIQSSGLGFNPTNLGELLLISMPALTEETRKGFTKQARDAAEDARVAVRNIRRDALSQLKDLVKEKEISEDEERRAADDVQKLTDKFVAEIEVAVKQKEADLMAV.

It belongs to the RRF family.

The protein resides in the cytoplasm. In terms of biological role, responsible for the release of ribosomes from messenger RNA at the termination of protein biosynthesis. May increase the efficiency of translation by recycling ribosomes from one round of translation to another. This Pseudomonas savastanoi pv. phaseolicola (strain 1448A / Race 6) (Pseudomonas syringae pv. phaseolicola (strain 1448A / Race 6)) protein is Ribosome-recycling factor.